Here is a 338-residue protein sequence, read N- to C-terminus: Probable tRNA pseudouridine synthase B (338 aa).

D82 functions as the Nucleophile in the catalytic mechanism. A PUA domain is found at 250-325 (LPKVWIRDSA…IAVDVDKVFM (76 aa)).

The protein belongs to the pseudouridine synthase TruB family. Type 2 subfamily.

The catalysed reaction is uridine(55) in tRNA = pseudouridine(55) in tRNA. In terms of biological role, could be responsible for synthesis of pseudouridine from uracil-55 in the psi GC loop of transfer RNAs. In Thermococcus kodakarensis (strain ATCC BAA-918 / JCM 12380 / KOD1) (Pyrococcus kodakaraensis (strain KOD1)), this protein is Probable tRNA pseudouridine synthase B.